A 58-amino-acid chain; its full sequence is uncharacterized protein (58 aa).

2 consecutive transmembrane segments (helical) span residues 5–25 (IAFE…IIAE) and 32–52 (WIVV…FKMI).

The protein localises to the cell membrane. This is an uncharacterized protein from Methanocaldococcus jannaschii (strain ATCC 43067 / DSM 2661 / JAL-1 / JCM 10045 / NBRC 100440) (Methanococcus jannaschii).